We begin with the raw amino-acid sequence, 275 residues long: Translation initiation factor 2 subunit alpha (275 aa).

The S1 motif domain maps to 12–83 (GEFVVATVKN…EKGHIDLSLK (72 aa)).

This sequence belongs to the eIF-2-alpha family. As to quaternary structure, heterotrimer composed of an alpha, a beta and a gamma chain.

EIF-2 functions in the early steps of protein synthesis by forming a ternary complex with GTP and initiator tRNA. The sequence is that of Translation initiation factor 2 subunit alpha from Thermococcus kodakarensis (strain ATCC BAA-918 / JCM 12380 / KOD1) (Pyrococcus kodakaraensis (strain KOD1)).